Consider the following 40-residue polypeptide: Adenylate kinase (40 aa).

An ATP-binding site is contributed by 10-15; it reads GAGKGT. Residues 30 to 40 are NMP; sequence STGDMFIKAIK. Thr31 serves as a coordination point for AMP.

The protein belongs to the adenylate kinase family. As to quaternary structure, monomer.

Its subcellular location is the cytoplasm. It carries out the reaction AMP + ATP = 2 ADP. It participates in purine metabolism; AMP biosynthesis via salvage pathway; AMP from ADP: step 1/1. Its function is as follows. Catalyzes the reversible transfer of the terminal phosphate group between ATP and AMP. Plays an important role in cellular energy homeostasis and in adenine nucleotide metabolism. This Staphylococcus carnosus protein is Adenylate kinase (adk).